A 452-amino-acid chain; its full sequence is Bifunctional protein GlmU (452 aa).

Positions 1-226 are pyrophosphorylase; the sequence is MSLTTVILAA…PMEVEGANNR (226 aa). UDP-N-acetyl-alpha-D-glucosamine is bound by residues 8–11, Lys22, Gln73, 78–79, 100–102, Gly137, Glu151, Asn166, and Asn224; these read LAAG, GT, and YGD. Asp102 is a binding site for Mg(2+). Asn224 contributes to the Mg(2+) binding site. A linker region spans residues 227–247; the sequence is IQLAGLERAYQAWQAQELMLN. Positions 248-452 are N-acetyltransferase; that stretch reads GATLADPARI…LDGWKRPVKK (205 aa). Residues Arg330 and Lys348 each coordinate UDP-N-acetyl-alpha-D-glucosamine. The Proton acceptor role is filled by His360. Positions 363 and 374 each coordinate UDP-N-acetyl-alpha-D-glucosamine. Acetyl-CoA-binding positions include Ala377, 383–384, Ser402, Ala420, and Arg437; that span reads NY.

This sequence in the N-terminal section; belongs to the N-acetylglucosamine-1-phosphate uridyltransferase family. It in the C-terminal section; belongs to the transferase hexapeptide repeat family. As to quaternary structure, homotrimer. Mg(2+) is required as a cofactor.

It localises to the cytoplasm. The enzyme catalyses alpha-D-glucosamine 1-phosphate + acetyl-CoA = N-acetyl-alpha-D-glucosamine 1-phosphate + CoA + H(+). It catalyses the reaction N-acetyl-alpha-D-glucosamine 1-phosphate + UTP + H(+) = UDP-N-acetyl-alpha-D-glucosamine + diphosphate. It functions in the pathway nucleotide-sugar biosynthesis; UDP-N-acetyl-alpha-D-glucosamine biosynthesis; N-acetyl-alpha-D-glucosamine 1-phosphate from alpha-D-glucosamine 6-phosphate (route II): step 2/2. Its pathway is nucleotide-sugar biosynthesis; UDP-N-acetyl-alpha-D-glucosamine biosynthesis; UDP-N-acetyl-alpha-D-glucosamine from N-acetyl-alpha-D-glucosamine 1-phosphate: step 1/1. The protein operates within bacterial outer membrane biogenesis; LPS lipid A biosynthesis. In terms of biological role, catalyzes the last two sequential reactions in the de novo biosynthetic pathway for UDP-N-acetylglucosamine (UDP-GlcNAc). The C-terminal domain catalyzes the transfer of acetyl group from acetyl coenzyme A to glucosamine-1-phosphate (GlcN-1-P) to produce N-acetylglucosamine-1-phosphate (GlcNAc-1-P), which is converted into UDP-GlcNAc by the transfer of uridine 5-monophosphate (from uridine 5-triphosphate), a reaction catalyzed by the N-terminal domain. This Pseudoalteromonas translucida (strain TAC 125) protein is Bifunctional protein GlmU.